The primary structure comprises 385 residues: 1-deoxy-D-xylulose 5-phosphate reductoisomerase (385 aa).

NADPH-binding residues include T10, G11, S12, I13, K37, and N124. K125 provides a ligand contact to 1-deoxy-D-xylulose 5-phosphate. E126 contacts NADPH. D150 contacts Mn(2+). 1-deoxy-D-xylulose 5-phosphate contacts are provided by S151, E152, S176, and H199. E152 serves as a coordination point for Mn(2+). Residue G205 coordinates NADPH. Residues S212, N217, K218, and E221 each contribute to the 1-deoxy-D-xylulose 5-phosphate site. E221 is a Mn(2+) binding site.

The protein belongs to the DXR family. It depends on Mg(2+) as a cofactor. Requires Mn(2+) as cofactor.

It carries out the reaction 2-C-methyl-D-erythritol 4-phosphate + NADP(+) = 1-deoxy-D-xylulose 5-phosphate + NADPH + H(+). Its pathway is isoprenoid biosynthesis; isopentenyl diphosphate biosynthesis via DXP pathway; isopentenyl diphosphate from 1-deoxy-D-xylulose 5-phosphate: step 1/6. In terms of biological role, catalyzes the NADPH-dependent rearrangement and reduction of 1-deoxy-D-xylulose-5-phosphate (DXP) to 2-C-methyl-D-erythritol 4-phosphate (MEP). The sequence is that of 1-deoxy-D-xylulose 5-phosphate reductoisomerase from Clostridium novyi (strain NT).